Consider the following 188-residue polypeptide: dCTP deaminase (188 aa).

109-114 is a dCTP binding site; sequence KSTYAR. Residue glutamate 135 is the Proton donor/acceptor of the active site. 3 residues coordinate dCTP: glutamine 154, tyrosine 168, and glutamine 178.

It belongs to the dCTP deaminase family. In terms of assembly, homotrimer.

The catalysed reaction is dCTP + H2O + H(+) = dUTP + NH4(+). The protein operates within pyrimidine metabolism; dUMP biosynthesis; dUMP from dCTP (dUTP route): step 1/2. Its function is as follows. Catalyzes the deamination of dCTP to dUTP. The protein is dCTP deaminase of Helicobacter pylori (strain Shi470).